A 510-amino-acid chain; its full sequence is Cobyric acid synthase (510 aa).

The region spanning 262–460 (EIKVGIIKLP…IHGIFENDEW (199 aa)) is the GATase cobBQ-type domain. C343 (nucleophile) is an active-site residue. H452 is an active-site residue.

It belongs to the CobB/CobQ family. CobQ subfamily.

It functions in the pathway cofactor biosynthesis; adenosylcobalamin biosynthesis. Catalyzes amidations at positions B, D, E, and G on adenosylcobyrinic A,C-diamide. NH(2) groups are provided by glutamine, and one molecule of ATP is hydrogenolyzed for each amidation. The polypeptide is Cobyric acid synthase (Prochlorococcus marinus (strain MIT 9515)).